Here is a 438-residue protein sequence, read N- to C-terminus: Coenzyme A disulfide reductase (438 aa).

Position 8 to 33 (8 to 33) interacts with FAD; sequence GAVAGGATCASQIRRLDKESDIIIFE. The substrate site is built by T15, Q19, R22, S39, and N42. C43 acts as the Nucleophile in catalysis. C43 functions as the Redox-active in the catalytic mechanism. Residue K71 participates in substrate binding. Residue 151 to 166 participates in NADP(+) binding; sequence VLVVGAGYVSLEVLEN. 267 to 277 contacts FAD; it reads TNVPNIYAIGD. Residue H299 coordinates substrate. An FAD-binding site is contributed by Y419. K427 contributes to the substrate binding site.

The protein belongs to the class-III pyridine nucleotide-disulfide oxidoreductase family. Homodimer. It depends on FAD as a cofactor.

It carries out the reaction NADP(+) + 2 CoA = CoA-disulfide + NADPH + H(+). Functionally, catalyzes specifically the NADPH-dependent reduction of coenzyme A disulfide. The sequence is that of Coenzyme A disulfide reductase from Staphylococcus aureus (strain MSSA476).